The primary structure comprises 835 residues: uncharacterized protein (835 aa).

Disordered stretches follow at residues 1–38 (MKTSRLSTVPTSSSSTSTSSSPSSSSGSGSSTNTVGSR), 317–477 (DFDL…QSGR), 489–668 (SLSK…IKRR), 721–750 (DLENNNNNNSNSNSNSNSNNNSKRSSVSSF), and 810–835 (QEQQEGEQQEERQQEQILDEDDELMF). Low complexity-rich tracts occupy residues 7–37 (STVPTSSSSTSTSSSPSSSSGSGSSTNTVGS), 328–351 (NNNNNNDNNNNNNTSTTRSKTPTT), and 361–395 (SSTNTTPTTTTTTTTTTTPNKTQSSSSTSLRSGSS). Polar residues-rich tracts occupy residues 396–406 (IGNRTEVSSSI) and 415–424 (IIRSKSSLGT). Over residues 432-442 (GGSGGGGGGGM) the composition is skewed to gly residues. Over residues 449 to 477 (PISKTPTTMITKTASSSSPNLATSTQSGR) the composition is skewed to polar residues. A compositionally biased stretch (low complexity) spans 489 to 510 (SLSKQSSSSNLTRSLPPIIKSP). The segment covering 511 to 521 (ISPPGPTPPAP) has biased composition (pro residues). Residues 522–629 (TLTKSKSTPS…STTSSATKKS (108 aa)) are compositionally biased toward low complexity. Polar residues predominate over residues 631 to 640 (ITKTNPTDEQ). 2 stretches are compositionally biased toward low complexity: residues 641–664 (TTTPKSITKTTTTTTTANSTSTSS) and 724–750 (NNNNNNSNSNSNSNSNNNSKRSSVSSF). Over residues 826-835 (ILDEDDELMF) the composition is skewed to acidic residues.

This is an uncharacterized protein from Dictyostelium discoideum (Social amoeba).